The following is a 750-amino-acid chain: Photosystem I P700 chlorophyll a apoprotein A1 (750 aa).

A run of 8 helical transmembrane segments spans residues 70 to 93 (VFSA…FHGA), 156 to 179 (LYCT…FHYH), 195 to 219 (LNHH…HVSL), 291 to 309 (IAHH…GHMY), 346 to 369 (WHAQ…HHMY), 385 to 411 (LSLF…IFMV), 433 to 455 (AIIS…LYIH), and 531 to 549 (FLVH…LILL). 2 residues coordinate [4Fe-4S] cluster: C573 and C582. Helical transmembrane passes span 589-610 (HVFL…HFSW) and 664-686 (LSAY…MFLF). Position 675 (H675) interacts with chlorophyll a'. Residues M683 and Y691 each coordinate chlorophyll a. W692 contributes to the phylloquinone binding site. Residues 724-744 (AVGVTHYLLGGIATTWAFFLA) form a helical membrane-spanning segment.

Belongs to the PsaA/PsaB family. In terms of assembly, the PsaA/B heterodimer binds the P700 chlorophyll special pair and subsequent electron acceptors. PSI consists of a core antenna complex that captures photons, and an electron transfer chain that converts photonic excitation into a charge separation. The eukaryotic PSI reaction center is composed of at least 11 subunits. Requires P700 is a chlorophyll a/chlorophyll a' dimer, A0 is one or more chlorophyll a, A1 is one or both phylloquinones and FX is a shared 4Fe-4S iron-sulfur center. as cofactor.

It localises to the plastid. Its subcellular location is the chloroplast thylakoid membrane. It catalyses the reaction reduced [plastocyanin] + hnu + oxidized [2Fe-2S]-[ferredoxin] = oxidized [plastocyanin] + reduced [2Fe-2S]-[ferredoxin]. Its function is as follows. PsaA and PsaB bind P700, the primary electron donor of photosystem I (PSI), as well as the electron acceptors A0, A1 and FX. PSI is a plastocyanin-ferredoxin oxidoreductase, converting photonic excitation into a charge separation, which transfers an electron from the donor P700 chlorophyll pair to the spectroscopically characterized acceptors A0, A1, FX, FA and FB in turn. Oxidized P700 is reduced on the lumenal side of the thylakoid membrane by plastocyanin. This chain is Photosystem I P700 chlorophyll a apoprotein A1, found in Nymphaea alba (White water-lily).